The primary structure comprises 461 residues: V-type ATP synthase beta chain (461 aa).

It belongs to the ATPase alpha/beta chains family.

Produces ATP from ADP in the presence of a proton gradient across the membrane. The V-type beta chain is a regulatory subunit. In Streptococcus pneumoniae (strain CGSP14), this protein is V-type ATP synthase beta chain.